The primary structure comprises 84 residues: U21-theraphotoxin-Cg1a 1 (84 aa).

A signal peptide spans 1-21 (MKVSVLITLAVLGVMFLLTSA). Residues 22 to 47 (EERGSDQMDSPAWLKSMEIIFQSEER) constitute a propeptide that is removed on maturation. 3 disulfides stabilise this stretch: C49-C63, C56-C68, and C62-C76. V82 carries the valine amide modification.

The protein belongs to the neurotoxin 10 (Hwtx-1) family. 05 (F4a) subfamily. In terms of tissue distribution, expressed by the venom gland.

It localises to the secreted. Functionally, probable ion channel inhibitor. The sequence is that of U21-theraphotoxin-Cg1a 1 from Chilobrachys guangxiensis (Chinese earth tiger tarantula).